The primary structure comprises 170 residues: Adenine phosphoribosyltransferase (170 aa).

It belongs to the purine/pyrimidine phosphoribosyltransferase family. Homodimer.

It is found in the cytoplasm. It catalyses the reaction AMP + diphosphate = 5-phospho-alpha-D-ribose 1-diphosphate + adenine. The protein operates within purine metabolism; AMP biosynthesis via salvage pathway; AMP from adenine: step 1/1. In terms of biological role, catalyzes a salvage reaction resulting in the formation of AMP, that is energically less costly than de novo synthesis. The sequence is that of Adenine phosphoribosyltransferase from Streptococcus sanguinis (strain SK36).